A 152-amino-acid polypeptide reads, in one-letter code: Ribosome maturation factor RimP (152 aa).

It belongs to the RimP family.

It is found in the cytoplasm. Its function is as follows. Required for maturation of 30S ribosomal subunits. This Aeromonas salmonicida (strain A449) protein is Ribosome maturation factor RimP.